The following is a 160-amino-acid chain: Crossover junction endodeoxyribonuclease RuvC (160 aa).

Residues D9, E68, and D141 contribute to the active site. Mg(2+) contacts are provided by D9, E68, and D141.

The protein belongs to the RuvC family. As to quaternary structure, homodimer which binds Holliday junction (HJ) DNA. The HJ becomes 2-fold symmetrical on binding to RuvC with unstacked arms; it has a different conformation from HJ DNA in complex with RuvA. In the full resolvosome a probable DNA-RuvA(4)-RuvB(12)-RuvC(2) complex forms which resolves the HJ. It depends on Mg(2+) as a cofactor.

The protein resides in the cytoplasm. The enzyme catalyses Endonucleolytic cleavage at a junction such as a reciprocal single-stranded crossover between two homologous DNA duplexes (Holliday junction).. The RuvA-RuvB-RuvC complex processes Holliday junction (HJ) DNA during genetic recombination and DNA repair. Endonuclease that resolves HJ intermediates. Cleaves cruciform DNA by making single-stranded nicks across the HJ at symmetrical positions within the homologous arms, yielding a 5'-phosphate and a 3'-hydroxyl group; requires a central core of homology in the junction. The consensus cleavage sequence is 5'-(A/T)TT(C/G)-3'. Cleavage occurs on the 3'-side of the TT dinucleotide at the point of strand exchange. HJ branch migration catalyzed by RuvA-RuvB allows RuvC to scan DNA until it finds its consensus sequence, where it cleaves and resolves the cruciform DNA. The protein is Crossover junction endodeoxyribonuclease RuvC of Campylobacter jejuni subsp. jejuni serotype O:2 (strain ATCC 700819 / NCTC 11168).